A 358-amino-acid chain; its full sequence is Alanine racemase (358 aa).

The active-site Proton acceptor; specific for D-alanine is the lysine 35. Lysine 35 carries the post-translational modification N6-(pyridoxal phosphate)lysine. Arginine 130 is a binding site for substrate. Tyrosine 255 serves as the catalytic Proton acceptor; specific for L-alanine. Residue methionine 303 participates in substrate binding.

Belongs to the alanine racemase family. Pyridoxal 5'-phosphate serves as cofactor.

The catalysed reaction is L-alanine = D-alanine. The protein operates within amino-acid biosynthesis; D-alanine biosynthesis; D-alanine from L-alanine: step 1/1. Functionally, catalyzes the interconversion of L-alanine and D-alanine. May also act on other amino acids. The chain is Alanine racemase (alr) from Shewanella baltica (strain OS195).